A 513-amino-acid polypeptide reads, in one-letter code: Histidine ammonia-lyase (513 aa).

The 5-imidazolinone (Ala-Gly) cross-link spans 143-145 (ASG). Ser144 is subject to 2,3-didehydroalanine (Ser).

The protein belongs to the PAL/histidase family. Contains an active site 4-methylidene-imidazol-5-one (MIO), which is formed autocatalytically by cyclization and dehydration of residues Ala-Ser-Gly.

It is found in the cytoplasm. The catalysed reaction is L-histidine = trans-urocanate + NH4(+). The protein operates within amino-acid degradation; L-histidine degradation into L-glutamate; N-formimidoyl-L-glutamate from L-histidine: step 1/3. This Xanthomonas campestris pv. campestris (strain B100) protein is Histidine ammonia-lyase.